The sequence spans 696 residues: ATP-dependent zinc metalloprotease FtsH (696 aa).

The Cytoplasmic segment spans residues 1–29 (MWLQVTNCSTLHSSLSYCGANTLSDMAKN). A helical membrane pass occupies residues 30–50 (LILWLVIAVVLMSVFQSFGPS). At 51–124 (DSAGRQVDYT…LGTPPEEPSL (74 aa)) the chain is on the periplasmic side. Residues 125–145 (LASIFISWFPMLLLIGVWVFF) traverse the membrane as a helical segment. Topologically, residues 146 to 696 (MRQMQGGGGG…APKEDDKPQA (551 aa)) are cytoplasmic. 219 to 226 (GPPGTGKT) lines the ATP pocket. Zn(2+) is bound at residue histidine 441. The active site involves glutamate 442. 2 residues coordinate Zn(2+): histidine 445 and aspartate 519. Residues 627-696 (RAPKGWGDTD…APKEDDKPQA (70 aa)) form a disordered region. Over residues 650–696 (PEAKTESAPEAKAEANVETEEKPVAADSEELKPKAEQAPKEDDKPQA) the composition is skewed to basic and acidic residues.

It in the central section; belongs to the AAA ATPase family. This sequence in the C-terminal section; belongs to the peptidase M41 family. In terms of assembly, homohexamer. Zn(2+) is required as a cofactor.

It is found in the cell inner membrane. In terms of biological role, acts as a processive, ATP-dependent zinc metallopeptidase for both cytoplasmic and membrane proteins. Plays a role in the quality control of integral membrane proteins. This is ATP-dependent zinc metalloprotease FtsH from Photobacterium profundum (strain SS9).